A 278-amino-acid chain; its full sequence is Probable aquaporin PIP2-8 (278 aa).

At Met1 the chain carries N-acetylmethionine. The Cytoplasmic segment spans residues 1–36 (MSKEVSEEGRHGKDYVDPPPAPLLDMAELKLWSFYR). An N6,N6-dimethyllysine modification is found at Lys3. Residues 37-57 (AIIAEFIATLLFLYVTVATVI) form a helical membrane-spanning segment. At 58–74 (GHKNQTGPCGGVGLLGI) the chain is on the extracellular side. Residues 75-95 (AWAFGGMIFVLVYCTAGISGG) form a helical membrane-spanning segment. Residues 96–116 (HINPAVTFGLFLARKVSLPRA) lie on the Cytoplasmic side of the membrane. The NPA 1 motif lies at 98-100 (NPA). A helical membrane pass occupies residues 117 to 137 (VAYMVAQCLGAICGVGLVKAF). At 138–158 (MMTPYKRLGGGANTVADGYST) the chain is on the extracellular side. A helical transmembrane segment spans residues 159-179 (GTALGAEIIGTFVLVYTVFSA). Residues 180 to 192 (TDPKRSARDSHVP) lie on the Cytoplasmic side of the membrane. A helical transmembrane segment spans residues 193–213 (VLAPLPIGFAVFMVHLATIPI). The Extracellular portion of the chain corresponds to 214 to 240 (TGTGINPARSFGAAVIYNNEKAWDDHW). The short motif at 219–221 (NPA) is the NPA 2 element. A helical transmembrane segment spans residues 241–261 (IFWVGPFVGALAAAAYHQYIL). Over 262 to 278 (RAAAIKALASFRSNPTN) the chain is Cytoplasmic. A phosphoserine mark is found at Ser271 and Ser274.

Belongs to the MIP/aquaporin (TC 1.A.8) family. PIP (TC 1.A.8.11) subfamily. In terms of tissue distribution, expressed in roots and floral buds.

It is found in the cell membrane. In terms of biological role, aquaporins facilitate the transport of water and small neutral solutes across cell membranes. The chain is Probable aquaporin PIP2-8 (PIP2-8) from Arabidopsis thaliana (Mouse-ear cress).